The chain runs to 426 residues: Endoglucanase Z (426 aa).

A signal peptide spans 1-43; the sequence is MPLSYLDKNPVIDSKKHALRKKLFLSCAYFGLSLACLSSNAWA. Residues 44-332 form a catalytic region; sequence SVEPLSVNGN…VKSIIQSWPY (289 aa). The active-site Proton donor is E176. Catalysis depends on E263, which acts as the Nucleophile. Residues 333 to 366 are linker; that stretch reads KAGSAASATTDPSTDTTTDTTVDEPTTTDTPATA. The disordered stretch occupies residues 336–367; sequence SAASATTDPSTDTTTDTTVDEPTTTDTPATAD. The interval 367–426 is cellulose-binding; it reads DCANANVYPNWVSKDWAGGQPTHNEAGQSIVYKGNLYTANWYTASVPGSDSSWTQVGSCN. The cysteines at positions 368 and 425 are disulfide-linked.

Belongs to the glycosyl hydrolase 5 (cellulase A) family.

The protein resides in the secreted. It catalyses the reaction Endohydrolysis of (1-&gt;4)-beta-D-glucosidic linkages in cellulose, lichenin and cereal beta-D-glucans.. In terms of biological role, represents 97% of the global cellulase activity. The protein is Endoglucanase Z (celZ) of Dickeya dadantii (strain 3937) (Erwinia chrysanthemi (strain 3937)).